The chain runs to 469 residues: 3-isopropylmalate dehydratase large subunit (469 aa).

[4Fe-4S] cluster-binding residues include cysteine 350, cysteine 410, and cysteine 413.

The protein belongs to the aconitase/IPM isomerase family. LeuC type 1 subfamily. In terms of assembly, heterodimer of LeuC and LeuD. [4Fe-4S] cluster is required as a cofactor.

It carries out the reaction (2R,3S)-3-isopropylmalate = (2S)-2-isopropylmalate. Its pathway is amino-acid biosynthesis; L-leucine biosynthesis; L-leucine from 3-methyl-2-oxobutanoate: step 2/4. In terms of biological role, catalyzes the isomerization between 2-isopropylmalate and 3-isopropylmalate, via the formation of 2-isopropylmaleate. The protein is 3-isopropylmalate dehydratase large subunit of Rhodopseudomonas palustris (strain ATCC BAA-98 / CGA009).